We begin with the raw amino-acid sequence, 205 residues long: Large ribosomal subunit protein uL4 (205 aa).

Positions 45-97 are disordered; that stretch reads RQGTSAVKNRSAVRGGGKKPWRQKGTGRARQGSIRAPQWRGGGTVFGPTPRSY. A compositionally biased stretch (basic residues) spans 60-71; the sequence is GGKKPWRQKGTG.

The protein belongs to the universal ribosomal protein uL4 family. As to quaternary structure, part of the 50S ribosomal subunit.

In terms of biological role, one of the primary rRNA binding proteins, this protein initially binds near the 5'-end of the 23S rRNA. It is important during the early stages of 50S assembly. It makes multiple contacts with different domains of the 23S rRNA in the assembled 50S subunit and ribosome. Functionally, forms part of the polypeptide exit tunnel. The polypeptide is Large ribosomal subunit protein uL4 (Lactobacillus gasseri (strain ATCC 33323 / DSM 20243 / BCRC 14619 / CIP 102991 / JCM 1131 / KCTC 3163 / NCIMB 11718 / NCTC 13722 / AM63)).